A 162-amino-acid chain; its full sequence is Lipoprotein signal peptidase (162 aa).

The next 3 helical transmembrane spans lie at 12–32 (WLWLVVVVLIIDLGSKYLILQ), 70–90 (WFFAGIAIGICVILMVMMYRS), and 102–122 (ALIIGGALGNLFDRLWHGFVV). Active-site residues include Asp123 and Asp141. Residues 137–157 (FNLADSAICIGAALIVLEGFL) traverse the membrane as a helical segment.

The protein belongs to the peptidase A8 family.

It localises to the cell inner membrane. The enzyme catalyses Release of signal peptides from bacterial membrane prolipoproteins. Hydrolyzes -Xaa-Yaa-Zaa-|-(S,diacylglyceryl)Cys-, in which Xaa is hydrophobic (preferably Leu), and Yaa (Ala or Ser) and Zaa (Gly or Ala) have small, neutral side chains.. Its pathway is protein modification; lipoprotein biosynthesis (signal peptide cleavage). Functionally, this protein specifically catalyzes the removal of signal peptides from prolipoproteins. This Citrobacter koseri (strain ATCC BAA-895 / CDC 4225-83 / SGSC4696) protein is Lipoprotein signal peptidase.